Reading from the N-terminus, the 530-residue chain is Membrane-associated transporter protein (530 aa).

Over 1–46 (MGSNSGQAGRHIYKSLADDGPFDSVEPPKRPTSRLIMHSMAMFGRE) the chain is Cytoplasmic. A helical transmembrane segment spans residues 47-67 (FCYAVEAAYVTPVLLSVGLPS). A topological domain (extracellular) is located at residue serine 68. Residues 69–89 (LYSIVWFLSPILGFLLQPVVG) traverse the membrane as a helical segment. Topologically, residues 90-110 (SASDHCRSRWGRRRPYILTLG) are cytoplasmic. Residues 111 to 131 (VMMLVGMALYLNGATVVAALI) form a helical membrane-spanning segment. The Extracellular segment spans residues 132-138 (ANPRRKL). Residues 139–159 (VWAISVTMIGVVLFDFAADFI) traverse the membrane as a helical segment. Residues 160 to 184 (DGPIKAYLFDVCSHQDKEKGLHYHA) are Cytoplasmic-facing. The chain crosses the membrane as a helical span at residues 185–205 (LFTGFGGALGYLLGAIDWAHL). Residues 206-216 (ELGRLLGTEFQ) lie on the Extracellular side of the membrane. The helical transmembrane segment at 217-237 (VMFFFSALVLTLCFTVHLCSI) threads the bilayer. Residues 238 to 318 (SEAPLTEVAK…ALVNMPPHYR (81 aa)) are Cytoplasmic-facing. Residues 319-339 (YLCISHLIGWTAFLSNMLFFT) traverse the membrane as a helical segment. Residues 340–366 (DFMGQIVYRGDPYSAHNSTEFLIYERG) are Extracellular-facing. Asparagine 356 is a glycosylation site (N-linked (GlcNAc...) asparagine). A helical transmembrane segment spans residues 367-387 (VEVGCWGLCINSVFSSLYSYF). The Cytoplasmic segment spans residues 388–398 (QKVLVSYIGLK). A helical transmembrane segment spans residues 399–419 (GLYFTGYLLFGLGTGFIGLFP). Residues 420 to 425 (NVYSTL) lie on the Extracellular side of the membrane. The chain crosses the membrane as a helical span at residues 426 to 446 (VLCSLFGVMSSTLYTVPFNLI). Residues 447–477 (TEYHREEEKERQQAPGGDPDNSVRGKGMDCA) lie on the Cytoplasmic side of the membrane. Residues 478 to 498 (TLTCMVQLAQILVGGGLGFLV) traverse the membrane as a helical segment. Over 499 to 504 (NTAGTV) the chain is Extracellular. Residues 505–525 (VVVVITASAVALIGCCFVALF) form a helical membrane-spanning segment. Residues 526-530 (VRYVD) lie on the Cytoplasmic side of the membrane.

The protein belongs to the glycoside-pentoside-hexuronide (GPH) cation symporter transporter (TC 2.A.2) family. In terms of assembly, interacts with TYRP1. In terms of tissue distribution, expressed in mature melanocytes.

Its subcellular location is the melanosome membrane. The enzyme catalyses sucrose(out) + H(+)(out) = sucrose(in) + H(+)(in). It catalyses the reaction D-glucose(out) + H(+)(out) = D-glucose(in) + H(+)(in). In terms of biological role, proton-associated glucose and sucrose transporter. May be able to transport also fructose. Expressed at a late melanosome maturation stage where functions as proton/glucose exporter which increase lumenal pH by decreasing glycolysis. Regulates melanogenesis by maintaining melanosome neutralization that is initially initiated by transient OCA2 and required for a proper function of the tyrosinase TYR. The chain is Membrane-associated transporter protein from Homo sapiens (Human).